The chain runs to 331 residues: Ketol-acid reductoisomerase (NADP(+)) (331 aa).

The 181-residue stretch at 2–182 (ARMYYDSDAN…GGTRAGILET (181 aa)) folds into the KARI N-terminal Rossmann domain. NADP(+)-binding positions include 25–28 (YGSQ), S51, S53, and 83–86 (DEVQ). The active site involves H108. G134 contacts NADP(+). Residues 183–328 (TFREETETDL…KDLRAMFSWL (146 aa)) form the KARI C-terminal knotted domain. Mg(2+) contacts are provided by D191, E195, E227, and E231. Substrate is bound at residue S252.

It belongs to the ketol-acid reductoisomerase family. Mg(2+) is required as a cofactor.

The enzyme catalyses (2R)-2,3-dihydroxy-3-methylbutanoate + NADP(+) = (2S)-2-acetolactate + NADPH + H(+). It carries out the reaction (2R,3R)-2,3-dihydroxy-3-methylpentanoate + NADP(+) = (S)-2-ethyl-2-hydroxy-3-oxobutanoate + NADPH + H(+). Its pathway is amino-acid biosynthesis; L-isoleucine biosynthesis; L-isoleucine from 2-oxobutanoate: step 2/4. The protein operates within amino-acid biosynthesis; L-valine biosynthesis; L-valine from pyruvate: step 2/4. Involved in the biosynthesis of branched-chain amino acids (BCAA). Catalyzes an alkyl-migration followed by a ketol-acid reduction of (S)-2-acetolactate (S2AL) to yield (R)-2,3-dihydroxy-isovalerate. In the isomerase reaction, S2AL is rearranged via a Mg-dependent methyl migration to produce 3-hydroxy-3-methyl-2-ketobutyrate (HMKB). In the reductase reaction, this 2-ketoacid undergoes a metal-dependent reduction by NADPH to yield (R)-2,3-dihydroxy-isovalerate. The polypeptide is Ketol-acid reductoisomerase (NADP(+)) (Trichodesmium erythraeum (strain IMS101)).